The sequence spans 178 residues: Large ribosomal subunit protein bL25 (178 aa).

The protein belongs to the bacterial ribosomal protein bL25 family. CTC subfamily. As to quaternary structure, part of the 50S ribosomal subunit; part of the 5S rRNA/L5/L18/L25 subcomplex. Contacts the 5S rRNA. Binds to the 5S rRNA independently of L5 and L18.

Its function is as follows. This is one of the proteins that binds to the 5S RNA in the ribosome where it forms part of the central protuberance. This chain is Large ribosomal subunit protein bL25, found in Campylobacter jejuni subsp. jejuni serotype O:6 (strain 81116 / NCTC 11828).